Reading from the N-terminus, the 322-residue chain is Acetyl-coenzyme A carboxylase carboxyl transferase subunit alpha (322 aa).

The CoA carboxyltransferase C-terminal domain maps to 32–293 (DISEEIARLE…KRALQDALRQ (262 aa)).

The protein belongs to the AccA family. Acetyl-CoA carboxylase is a heterohexamer composed of biotin carboxyl carrier protein (AccB), biotin carboxylase (AccC) and two subunits each of ACCase subunit alpha (AccA) and ACCase subunit beta (AccD).

It is found in the cytoplasm. The catalysed reaction is N(6)-carboxybiotinyl-L-lysyl-[protein] + acetyl-CoA = N(6)-biotinyl-L-lysyl-[protein] + malonyl-CoA. It participates in lipid metabolism; malonyl-CoA biosynthesis; malonyl-CoA from acetyl-CoA: step 1/1. Component of the acetyl coenzyme A carboxylase (ACC) complex. First, biotin carboxylase catalyzes the carboxylation of biotin on its carrier protein (BCCP) and then the CO(2) group is transferred by the carboxyltransferase to acetyl-CoA to form malonyl-CoA. This is Acetyl-coenzyme A carboxylase carboxyl transferase subunit alpha from Aromatoleum aromaticum (strain DSM 19018 / LMG 30748 / EbN1) (Azoarcus sp. (strain EbN1)).